The following is a 561-amino-acid chain: Putative transport protein YbjL (561 aa).

5 consecutive transmembrane segments (helical) span residues 8–28, 32–52, 66–86, 94–114, and 158–178; these read LLNG…LCLG, LGSV…LLGQ, FMLF…SIFF, MLAL…GKLF, and NLSL…IVGA. RCK C-terminal domains follow at residues 200 to 288 and 292 to 373; these read RGLD…SFRN and VFDR…RIGF. The next 5 membrane-spanning stretches (helical) occupy residues 383–403, 406–426, 447–467, 475–495, and 540–560; these read LLAF…TFQF, FSFG…LGFL, FGLM…ISNG, MLIA…LFGA, and AIAN…WPGL.

Belongs to the AAE transporter (TC 2.A.81) family. YbjL subfamily.

It localises to the cell membrane. The sequence is that of Putative transport protein YbjL from Salmonella dublin (strain CT_02021853).